The following is a 127-amino-acid chain: MFRTLMNAKIHRARVTEANLNYVGSITIDADILDAVGMVPNEKVQIVNNNNGARFETYIIPGERGSGVFCLNGAAARLVQKGDIIIVISYAIVPEEKIAQHRPKIAIMDENNRIQQLIVEEPAHTVL.

The Schiff-base intermediate with substrate; via pyruvic acid role is filled by Ser-25. A Pyruvic acid (Ser) modification is found at Ser-25. Thr-57 is a substrate binding site. Residue Tyr-58 is the Proton donor of the active site. 73–75 (GAA) lines the substrate pocket.

This sequence belongs to the PanD family. As to quaternary structure, heterooctamer of four alpha and four beta subunits. Requires pyruvate as cofactor. In terms of processing, is synthesized initially as an inactive proenzyme, which is activated by self-cleavage at a specific serine bond to produce a beta-subunit with a hydroxyl group at its C-terminus and an alpha-subunit with a pyruvoyl group at its N-terminus.

Its subcellular location is the cytoplasm. The catalysed reaction is L-aspartate + H(+) = beta-alanine + CO2. It functions in the pathway cofactor biosynthesis; (R)-pantothenate biosynthesis; beta-alanine from L-aspartate: step 1/1. In terms of biological role, catalyzes the pyruvoyl-dependent decarboxylation of aspartate to produce beta-alanine. The protein is Aspartate 1-decarboxylase of Geobacillus sp. (strain WCH70).